Consider the following 839-residue polypeptide: Probable beta-glucosidase I (839 aa).

Residue Asn-197 is glycosylated (N-linked (GlcNAc...) asparagine). Asp-225 is a catalytic residue. Residues 396-556 enclose the PA14 domain; sequence DGKTGFKFRV…TQEELISKAV (161 aa). Residue Asn-494 is glycosylated (N-linked (GlcNAc...) asparagine).

It belongs to the glycosyl hydrolase 3 family.

It is found in the secreted. The enzyme catalyses Hydrolysis of terminal, non-reducing beta-D-glucosyl residues with release of beta-D-glucose.. It participates in glycan metabolism; cellulose degradation. Functionally, beta-glucosidases are one of a number of cellulolytic enzymes, and catalyze the last step releasing glucose from the inhibitory cellobiose. The protein is Probable beta-glucosidase I (bglI) of Emericella nidulans (strain FGSC A4 / ATCC 38163 / CBS 112.46 / NRRL 194 / M139) (Aspergillus nidulans).